The chain runs to 1047 residues: Probable alpha-mannosidase At5g66150 (1047 aa).

The N-terminal stretch at 1-27 (MEKPGMSLLKGSLCVIVFLLLLSLVES) is a signal peptide. Positions 56, 58, and 178 each coordinate Zn(2+). N-linked (GlcNAc...) asparagine glycosylation is found at Asn-280, Asn-287, and Asn-345. His-419 contributes to the Zn(2+) binding site. 2 disulfide bridges follow: Cys-455–Cys-465 and Cys-476–Cys-484. N-linked (GlcNAc...) asparagine glycans are attached at residues Asn-480, Asn-508, Asn-541, Asn-605, Asn-606, Asn-668, Asn-780, and Asn-857. Cys-855 and Cys-860 are disulfide-bonded.

The protein belongs to the glycosyl hydrolase 38 family. Homodimer. It depends on Zn(2+) as a cofactor.

The protein resides in the vacuole. It catalyses the reaction Hydrolysis of terminal, non-reducing alpha-D-mannose residues in alpha-D-mannosides.. Functionally, liberates mannose from p-nitrophenyl-alpha-D-mannoside in vitro. The sequence is that of Probable alpha-mannosidase At5g66150 from Arabidopsis thaliana (Mouse-ear cress).